Reading from the N-terminus, the 243-residue chain is MYQWIQRDSDVYQRWPWWRRLLIVLLVLALMSVLQVIVFRFVDPPLSMTMVGRYLEAWSDRQWNFRLHYVWCDLEQIAPSVPISLVAAEDQRFPLHHGFDFDAIKKALGHHSRGGHLRGASTISQQVAKNLFLWSGRSFVRKGLEGWYTFWIELFWPKRRILEIYANIAEFGDGVYGVQAAAQRYLEKDAADLDESDAAQLAAVLPSPRRYNIQDPGPYIRWRSSWIQRQAEQLGGSAYLDMH.

Residues 22 to 42 traverse the membrane as a helical segment; it reads LIVLLVLALMSVLQVIVFRFV.

The protein belongs to the glycosyltransferase 51 family.

It localises to the cell inner membrane. It catalyses the reaction [GlcNAc-(1-&gt;4)-Mur2Ac(oyl-L-Ala-gamma-D-Glu-L-Lys-D-Ala-D-Ala)](n)-di-trans,octa-cis-undecaprenyl diphosphate + beta-D-GlcNAc-(1-&gt;4)-Mur2Ac(oyl-L-Ala-gamma-D-Glu-L-Lys-D-Ala-D-Ala)-di-trans,octa-cis-undecaprenyl diphosphate = [GlcNAc-(1-&gt;4)-Mur2Ac(oyl-L-Ala-gamma-D-Glu-L-Lys-D-Ala-D-Ala)](n+1)-di-trans,octa-cis-undecaprenyl diphosphate + di-trans,octa-cis-undecaprenyl diphosphate + H(+). The protein operates within cell wall biogenesis; peptidoglycan biosynthesis. Functionally, peptidoglycan polymerase that catalyzes glycan chain elongation from lipid-linked precursors. The sequence is that of Biosynthetic peptidoglycan transglycosylase from Xylella fastidiosa (strain 9a5c).